The following is a 316-amino-acid chain: Olfactory receptor 1165 (316 aa).

Over 1-28 the chain is Extracellular; sequence MMLDLGNESSVTMFILSGFSEYPHLHAP. N-linked (GlcNAc...) asparagine glycosylation is present at N7. Residues 29–50 form a helical membrane-spanning segment; it reads LFLLFFMIYTVTLIGNLGIIVV. Topologically, residues 51-61 are cytoplasmic; the sequence is RKVNPKLHTPM. Residues 62 to 80 form a helical membrane-spanning segment; sequence YFFLSHLSFLDICYSSVFT. Over 81 to 99 the chain is Extracellular; the sequence is PKLLEILIVEDRTISFKGC. A disulfide bridge links C99 with C181. A helical membrane pass occupies residues 100-122; it reads MTQFFLICAFVITEMFMLAVMAY. At 123–141 the chain is on the cytoplasmic side; it reads DRFVAVCNPLLYTVSMSPK. Residues 142–166 traverse the membrane as a helical segment; that stretch reads LCAFLVAGTYMWGVLCSLTITYSLL. The Extracellular portion of the chain corresponds to 167-205; it reads QLSYCGPNIINHFGCEYSAILSLSCSDPTFSQVVCLTIS. Residues 206–228 form a helical membrane-spanning segment; that stretch reads IFNETCSLLIILASYVFIVVTII. Topologically, residues 229–239 are cytoplasmic; it reads KMPSKGGLQKA. A helical transmembrane segment spans residues 240-263; that stretch reads FSTCSSHLTAISIFHGIILLLYCV. At 264–268 the chain is on the extracellular side; sequence PNSKN. Residues 269-291 traverse the membrane as a helical segment; that stretch reads SWLVVKVATVLFTVMIPMLNPLI. At 292–316 the chain is on the cytoplasmic side; sequence YSLRNKDVKGTVSRLMHLKLQAHST.

The protein belongs to the G-protein coupled receptor 1 family.

It is found in the cell membrane. Its function is as follows. Olfactory receptor. This chain is Olfactory receptor 1165, found in Mus musculus (Mouse).